Here is a 347-residue protein sequence, read N- to C-terminus: tRNA pseudouridine synthase D (347 aa).

The active-site Nucleophile is D81. A TRUD domain is found at 158–304 (GVPNYFGNQR…MRHDRRAIAL (147 aa)).

The protein belongs to the pseudouridine synthase TruD family.

The enzyme catalyses uridine(13) in tRNA = pseudouridine(13) in tRNA. Responsible for synthesis of pseudouridine from uracil-13 in transfer RNAs. This chain is tRNA pseudouridine synthase D, found in Vibrio vulnificus (strain YJ016).